A 312-amino-acid polypeptide reads, in one-letter code: R2-like ligand binding oxidase (312 aa).

Residues E68, E101, and H104 each coordinate Mn(2+). Residues 71-162 (VTQDIQPFMA…QAQVRASVTY (92 aa)) constitute a cross-link (3-(O4'-tyrosyl)-valine (Val-Tyr)). E101 lines the Fe cation pocket. Positions 167, 202, and 205 each coordinate Fe cation.

Belongs to the ribonucleoside diphosphate reductase small chain family. R2-like ligand binding oxidase subfamily. As to quaternary structure, homodimer. Fe cation is required as a cofactor. Mn(2+) serves as cofactor.

In terms of biological role, probable oxidase that might be involved in lipid metabolism. This Mycolicibacterium gilvum (strain PYR-GCK) (Mycobacterium gilvum (strain PYR-GCK)) protein is R2-like ligand binding oxidase.